Here is a 210-residue protein sequence, read N- to C-terminus: Large ribosomal subunit protein bL25 (210 aa).

Positions 179 to 210 are disordered; it reads LPPQQEEEIHSGEQQEPGQPEAEEGRETTPEG. The segment covering 201-210 has biased composition (basic and acidic residues); the sequence is EEGRETTPEG.

This sequence belongs to the bacterial ribosomal protein bL25 family. CTC subfamily. In terms of assembly, part of the 50S ribosomal subunit; part of the 5S rRNA/L5/L18/L25 subcomplex. Contacts the 5S rRNA. Binds to the 5S rRNA independently of L5 and L18.

This is one of the proteins that binds to the 5S RNA in the ribosome where it forms part of the central protuberance. The protein is Large ribosomal subunit protein bL25 of Geobacillus thermodenitrificans (strain NG80-2).